Consider the following 314-residue polypeptide: 4-hydroxy-3-methylbut-2-enyl diphosphate reductase (314 aa).

[4Fe-4S] cluster is bound at residue C12. The (2E)-4-hydroxy-3-methylbut-2-enyl diphosphate site is built by H41 and H74. Dimethylallyl diphosphate contacts are provided by H41 and H74. Isopentenyl diphosphate is bound by residues H41 and H74. A [4Fe-4S] cluster-binding site is contributed by C96. H124 contributes to the (2E)-4-hydroxy-3-methylbut-2-enyl diphosphate binding site. A dimethylallyl diphosphate-binding site is contributed by H124. H124 serves as a coordination point for isopentenyl diphosphate. E126 (proton donor) is an active-site residue. T167 is a binding site for (2E)-4-hydroxy-3-methylbut-2-enyl diphosphate. C197 contacts [4Fe-4S] cluster. 4 residues coordinate (2E)-4-hydroxy-3-methylbut-2-enyl diphosphate: S225, S226, N227, and S269. Dimethylallyl diphosphate contacts are provided by S225, S226, N227, and S269. Residues S225, S226, N227, and S269 each contribute to the isopentenyl diphosphate site.

This sequence belongs to the IspH family. [4Fe-4S] cluster is required as a cofactor.

The catalysed reaction is isopentenyl diphosphate + 2 oxidized [2Fe-2S]-[ferredoxin] + H2O = (2E)-4-hydroxy-3-methylbut-2-enyl diphosphate + 2 reduced [2Fe-2S]-[ferredoxin] + 2 H(+). The enzyme catalyses dimethylallyl diphosphate + 2 oxidized [2Fe-2S]-[ferredoxin] + H2O = (2E)-4-hydroxy-3-methylbut-2-enyl diphosphate + 2 reduced [2Fe-2S]-[ferredoxin] + 2 H(+). The protein operates within isoprenoid biosynthesis; dimethylallyl diphosphate biosynthesis; dimethylallyl diphosphate from (2E)-4-hydroxy-3-methylbutenyl diphosphate: step 1/1. Its pathway is isoprenoid biosynthesis; isopentenyl diphosphate biosynthesis via DXP pathway; isopentenyl diphosphate from 1-deoxy-D-xylulose 5-phosphate: step 6/6. Catalyzes the conversion of 1-hydroxy-2-methyl-2-(E)-butenyl 4-diphosphate (HMBPP) into a mixture of isopentenyl diphosphate (IPP) and dimethylallyl diphosphate (DMAPP). Acts in the terminal step of the DOXP/MEP pathway for isoprenoid precursor biosynthesis. The chain is 4-hydroxy-3-methylbut-2-enyl diphosphate reductase from Pseudoalteromonas atlantica (strain T6c / ATCC BAA-1087).